A 714-amino-acid chain; its full sequence is DNA ligase (714 aa).

Residues 59–63, 108–109, and Glu139 contribute to the NAD(+) site; these read DYEYD and SL. Lys141 (N6-AMP-lysine intermediate) is an active-site residue. 4 residues coordinate NAD(+): Arg162, Glu200, Lys325, and Lys349. Zn(2+) contacts are provided by Cys443, Cys446, Cys461, and Cys466. In terms of domain architecture, BRCT spans 624–713; sequence VVENIFEGKT…IPDDLKDKVH (90 aa).

Belongs to the NAD-dependent DNA ligase family. LigA subfamily. Requires Mg(2+) as cofactor. It depends on Mn(2+) as a cofactor.

It catalyses the reaction NAD(+) + (deoxyribonucleotide)n-3'-hydroxyl + 5'-phospho-(deoxyribonucleotide)m = (deoxyribonucleotide)n+m + AMP + beta-nicotinamide D-nucleotide.. Functionally, DNA ligase that catalyzes the formation of phosphodiester linkages between 5'-phosphoryl and 3'-hydroxyl groups in double-stranded DNA using NAD as a coenzyme and as the energy source for the reaction. It is essential for DNA replication and repair of damaged DNA. This chain is DNA ligase, found in Persephonella marina (strain DSM 14350 / EX-H1).